Reading from the N-terminus, the 372-residue chain is Peroxisomal biogenesis factor 3 (372 aa).

Over 1–15 the chain is Cytoplasmic; sequence MLRSMWNFLKRHKKK. A targeting to peroxisomes region spans residues 1–45; the sequence is MLRSMWNFLKRHKKKCIFLGTVLGGVYILGKYGQKKLREIQEREA. Residues 16–36 form a helical membrane-spanning segment; the sequence is CIFLGTVLGGVYILGKYGQKK. The Peroxisomal segment spans residues 37–116; it reads LREIQEREAA…LKIISFTRSI (80 aa). A helical membrane pass occupies residues 117-140; the sequence is VAVYSTCMLVVLLRVQLNIIGGYI. Positions 120–136 are interaction with PEX19; the sequence is YSTCMLVVLLRVQLNII. At 141–372 the chain is on the cytoplasmic side; the sequence is YLDNATVGKN…AFSTPQQLEK (232 aa).

The protein belongs to the peroxin-3 family. As to quaternary structure, interacts with PEX19.

It is found in the peroxisome membrane. Involved in peroxisome biosynthesis and integrity. Assembles membrane vesicles before the matrix proteins are translocated. As a docking factor for PEX19, is necessary for the import of peroxisomal membrane proteins in the peroxisomes. This Rattus norvegicus (Rat) protein is Peroxisomal biogenesis factor 3 (Pex3).